We begin with the raw amino-acid sequence, 201 residues long: Superoxide dismutase [Mn] (201 aa).

Mn(2+) is bound by residues H27, H81, D163, and H167.

This sequence belongs to the iron/manganese superoxide dismutase family. As to quaternary structure, homodimer. The cofactor is Mn(2+).

It is found in the secreted. It catalyses the reaction 2 superoxide + 2 H(+) = H2O2 + O2. Functionally, destroys superoxide anion radicals which are normally produced within the cells and which are toxic to biological systems. In Streptococcus pyogenes, this protein is Superoxide dismutase [Mn] (sodA).